We begin with the raw amino-acid sequence, 473 residues long: MNWEMVIGLEVHIQLSTKSKLFSTSATKYGQHQNTQAAFLDLGLPGTLPIVNKEAIRKAVIFGLAVDAKISKDSFFARKNYFYPDLSKGYQISQSTNPIVQEGRLEIETSKGLKTIRIERAHLEEDAGKSVHGYIAGETGLDYNRAGTPLLEIVTYPDFRSAEEVVAYLKKLHQLVKHLGICDGNMQEGSFRCDVNLSIRPQGQAKFGTRAELKNINSFRFIDKAIEYEYARQVSVLESGGEVVQETRLYDADANETRSMRAKEDAFDYRYFPDPDLLPLVITDEYIESIKKQMPLKSEEREAVYREHLAEQEVEFLLSNLEIADYYDKVAVVIGYKPAYNWITVDLISTLNRAEKEFSSDVVPAEILLEIIANVQKDIISQANAKKVIAEYIDAPSAIEAIIEKLGLKQVSDEGMIRELVQGIIAANPQQAADFKAGKTKLMSFFVGQAMKASKGKANPKQVNQIVQEELNK.

The protein belongs to the GatB/GatE family. GatB subfamily. As to quaternary structure, heterotrimer of A, B and C subunits.

The enzyme catalyses L-glutamyl-tRNA(Gln) + L-glutamine + ATP + H2O = L-glutaminyl-tRNA(Gln) + L-glutamate + ADP + phosphate + H(+). The catalysed reaction is L-aspartyl-tRNA(Asn) + L-glutamine + ATP + H2O = L-asparaginyl-tRNA(Asn) + L-glutamate + ADP + phosphate + 2 H(+). Its function is as follows. Allows the formation of correctly charged Asn-tRNA(Asn) or Gln-tRNA(Gln) through the transamidation of misacylated Asp-tRNA(Asn) or Glu-tRNA(Gln) in organisms which lack either or both of asparaginyl-tRNA or glutaminyl-tRNA synthetases. The reaction takes place in the presence of glutamine and ATP through an activated phospho-Asp-tRNA(Asn) or phospho-Glu-tRNA(Gln). This chain is Aspartyl/glutamyl-tRNA(Asn/Gln) amidotransferase subunit B, found in Francisella tularensis subsp. mediasiatica (strain FSC147).